Reading from the N-terminus, the 119-residue chain is Beta-2-microglobulin (119 aa).

An N-terminal signal peptide occupies residues 1 to 20 (MARTVATFFLMLVSLACLDA). Residues 25-114 (PQVQVYTRHP…VTLKEPKVVT (90 aa)) form the Ig-like C1-type domain. The cysteines at positions 45 and 100 are disulfide-linked.

The protein belongs to the beta-2-microglobulin family. In terms of assembly, heterodimer of an alpha chain and a beta chain. Beta-2-microglobulin is the beta-chain of major histocompatibility complex class I molecules.

The protein localises to the secreted. In terms of biological role, component of the class I major histocompatibility complex (MHC). Involved in the presentation of peptide antigens to the immune system. This is Beta-2-microglobulin (B2M) from Sigmodon hispidus (Hispid cotton rat).